Reading from the N-terminus, the 582-residue chain is Sodium-dependent low-affinity dicarboxylate transporter 1 (582 aa).

The next 12 membrane-spanning stretches (helical) occupy residues 17–37, 59–79, 87–107, 130–150, 224–244, 271–291, 317–337, 353–373, 401–421, 455–475, 482–502, and 527–547; these read SFVI…VGDS, ALPL…FGIM, AYLP…LAVE, VMAG…NTAT, LMLS…TGTA, IFAF…LYLL, FSFA…LWIL, EFVS…TLPE, FPWS…GVKE, TNVC…AELA, PLNF…LPVA, and VTLG…GFVF.

This sequence belongs to the SLC13A/DASS transporter (TC 2.A.47) family. NADC subfamily. In terms of tissue distribution, nad-1 and nad-2 are coexpressed in the intestinal tract from early larvae to adults, expression is from the pharynx through to the anus. Expression level is significantly greater in the anterior half of the intestine than in the posterior half.

The protein resides in the membrane. Its function is as follows. Low affinity sodium-dicarboxylate cotransporter that accepts a range of tricarboxylic acid-cycle intermediates with 4-5 carbon atoms. There is no interaction with monocarboxylates. This is Sodium-dependent low-affinity dicarboxylate transporter 1 (nac-1) from Caenorhabditis elegans.